We begin with the raw amino-acid sequence, 941 residues long: Isoleucine--tRNA ligase (941 aa).

The 'HIGH' region signature appears at 58 to 68 (PYANGDIHIGH). Glu563 provides a ligand contact to L-isoleucyl-5'-AMP. Residues 604-608 (KMSKS) carry the 'KMSKS' region motif. Residue Lys607 participates in ATP binding. The Zn(2+) site is built by Cys904, Cys907, Cys924, and Cys927.

The protein belongs to the class-I aminoacyl-tRNA synthetase family. IleS type 1 subfamily. In terms of assembly, monomer. The cofactor is Zn(2+).

The protein localises to the cytoplasm. The catalysed reaction is tRNA(Ile) + L-isoleucine + ATP = L-isoleucyl-tRNA(Ile) + AMP + diphosphate. Functionally, catalyzes the attachment of isoleucine to tRNA(Ile). As IleRS can inadvertently accommodate and process structurally similar amino acids such as valine, to avoid such errors it has two additional distinct tRNA(Ile)-dependent editing activities. One activity is designated as 'pretransfer' editing and involves the hydrolysis of activated Val-AMP. The other activity is designated 'posttransfer' editing and involves deacylation of mischarged Val-tRNA(Ile). The chain is Isoleucine--tRNA ligase from Halorhodospira halophila (strain DSM 244 / SL1) (Ectothiorhodospira halophila (strain DSM 244 / SL1)).